A 203-amino-acid polypeptide reads, in one-letter code: MDPVIIGIGGPVGAGKTQLVERLTRAMSEEISMAAITNDIYTIEDAKILSRTSVLPEERIVGIETGGCPHTAIREDTSMNEAAIEQLKARFPDLQVIFVESGGDNLSATFSPELVDFSIYIIDVAQGEKIPRKAGQGMIKSDLFIVNKTDLAPYVGADLSVMESDSKVFRKDRPFAFTNLKTDEGLDVVMDWIRNDVLMADLG.

Residue 10–17 coordinates GTP; that stretch reads GPVGAGKT.

Belongs to the SIMIBI class G3E GTPase family. UreG subfamily. Homodimer. UreD, UreF and UreG form a complex that acts as a GTP-hydrolysis-dependent molecular chaperone, activating the urease apoprotein by helping to assemble the nickel containing metallocenter of UreC. The UreE protein probably delivers the nickel.

Its subcellular location is the cytoplasm. In terms of biological role, facilitates the functional incorporation of the urease nickel metallocenter. This process requires GTP hydrolysis, probably effectuated by UreG. The protein is Urease accessory protein UreG of Micrococcus luteus (strain ATCC 4698 / DSM 20030 / JCM 1464 / CCM 169 / CCUG 5858 / IAM 1056 / NBRC 3333 / NCIMB 9278 / NCTC 2665 / VKM Ac-2230) (Micrococcus lysodeikticus).